The primary structure comprises 591 residues: Protein CBFA2T3 (591 aa).

A disordered region spans residues 1–105 (MPGGTPRLEG…SSSASLSTHQ (105 aa)). Residues 1 to 381 (MPGGTPRLEG…ADREELNHWI (381 aa)) are mediates localization to the nucleus. A compositionally biased stretch (pro residues) spans 41–52 (STPPNMPPPPPA). A compositionally biased stretch (polar residues) spans 55 to 105 (QGATRHPSFTPSTMMNGSSHSPTAINGAPSTPNGFSNGPATSSSASLSTHQ). Residues 112–207 (ARQLSKLKRF…SPAQYLAQHE (96 aa)) enclose the TAFH domain. 2 disordered regions span residues 226-291 (LEVS…PPQH) and 386-420 (DAED…DFAP). A compositionally biased stretch (basic and acidic residues) spans 230 to 256 (ESGKRRTPDRTKENGLDRDPLHPEHLS). The segment covering 263–274 (SPAQRYSPSNGL) has biased composition (polar residues). Over residues 279-290 (NGLPHPPGPPPQ) the composition is skewed to pro residues. The segment covering 394–410 (SPPSARPHNSSSSSEAP) has biased composition (low complexity). Residues 433–488 (RKAEEAVNEVKRQAMSELQKAVSDAERKAHELITTERAKMERALAEAKRQASEDAL) adopt a coiled-coil conformation. 8 residues coordinate Zn(2+): Cys-501, Cys-504, Cys-512, Cys-515, Cys-521, Cys-525, His-533, and Cys-537. An MYND-type zinc finger spans residues 501–537 (CWNCGRKASETCSGCNTARYCGSFCQHKDWEKHHHVC). The tract at residues 548-591 (SVPTAVGQPEAVPPMASSPSDAGSAGASRAGTPGTPAPLESASR) is disordered. Low complexity predominate over residues 560 to 585 (PPMASSPSDAGSAGASRAGTPGTPAP).

The protein belongs to the CBFA2T family.

The protein localises to the nucleus. The protein resides in the nucleolus. Its subcellular location is the nucleoplasm. It localises to the golgi apparatus. Functionally, functions as a transcriptional repressor. Regulates the proliferation and the differentiation of erythroid progenitors. Plays a role in granulocyte differentiation. May also function as an A-kinase-anchoring protein. This Gallus gallus (Chicken) protein is Protein CBFA2T3 (CBFA2T3).